Reading from the N-terminus, the 131-residue chain is MSWQTYVDEHLMCEIEGHHLTSAAIVGHDGTVWAQSAAFPQFKPEEMTNIMKDFDEPGFLAPTGLFLGPTKYMVIQGEPGAVIRGKKGSGGITVKKTGQALVVGIYDEPMTPGQCNMVVERLGDYLVEQGL.

Belongs to the profilin family. Occurs in many kinds of cells as a complex with monomeric actin in a 1:1 ratio.

It localises to the cytoplasm. The protein localises to the cytoskeleton. Its function is as follows. Binds to actin and affects the structure of the cytoskeleton. At high concentrations, profilin prevents the polymerization of actin, whereas it enhances it at low concentrations. By binding to PIP2, it inhibits the formation of IP3 and DG. May serve as a modulator in pollen germination and pollen tube growth. In Oryza sativa subsp. japonica (Rice), this protein is Profilin-A.